The sequence spans 309 residues: Ornithine carbamoyltransferase (309 aa).

Carbamoyl phosphate contacts are provided by residues 57–60, Gln84, Arg108, and 135–138; these read STRT and HPCQ. L-ornithine is bound by residues Asn166, Asp226, and 230 to 231; that span reads SM. Carbamoyl phosphate contacts are provided by residues 265–266 and Arg293; that span reads CL.

Belongs to the aspartate/ornithine carbamoyltransferase superfamily. OTCase family.

The protein resides in the cytoplasm. The enzyme catalyses carbamoyl phosphate + L-ornithine = L-citrulline + phosphate + H(+). Its pathway is amino-acid biosynthesis; L-arginine biosynthesis; L-arginine from L-ornithine and carbamoyl phosphate: step 1/3. Its function is as follows. Reversibly catalyzes the transfer of the carbamoyl group from carbamoyl phosphate (CP) to the N(epsilon) atom of ornithine (ORN) to produce L-citrulline. This Rhizorhabdus wittichii (strain DSM 6014 / CCUG 31198 / JCM 15750 / NBRC 105917 / EY 4224 / RW1) (Sphingomonas wittichii) protein is Ornithine carbamoyltransferase.